A 459-amino-acid chain; its full sequence is MIKDPFARLGLDREVLTVTQLNGRARVLLEDVFSNIWVEGEISNLARPASGHVYFTLKDSGAQVRCALFRQNAARVRQALKDGLAVKVRGKVSLFEGRGDYQLILDTVEPAGDGALRLAFDALKDKLSAEGLFSAERKVPLPAHPQRIGIISSPTGAVIRDIISVFRRRAPQVVLTLIPTAVQGREATAQIVRALQLADARGFDALILARGGGSLEDLWCFNEEAVARAVDACVTPIVSAVGHETDVSISDFVADVRAPTPSAAAELLAPDSSDLQRRVDNLHRRLVMRMRDRLVRDRLRLDGLARRLRHPGERLRQQAQRLDDLDMRLRRAFERSLNTRRERLIRLETRLGAQHPGRQLALLRQRLDSLAERLPRAMREGLKGRRLQLHSQMQTLHVVSPLATLGRGYSILLDDRGQAIRSAGQTRPGQRLSARLGEGELQVRVEDNHLTPVTLSLLD.

Belongs to the XseA family. As to quaternary structure, heterooligomer composed of large and small subunits.

It localises to the cytoplasm. It carries out the reaction Exonucleolytic cleavage in either 5'- to 3'- or 3'- to 5'-direction to yield nucleoside 5'-phosphates.. In terms of biological role, bidirectionally degrades single-stranded DNA into large acid-insoluble oligonucleotides, which are then degraded further into small acid-soluble oligonucleotides. In Pseudomonas fluorescens (strain ATCC BAA-477 / NRRL B-23932 / Pf-5), this protein is Exodeoxyribonuclease 7 large subunit.